Here is a 379-residue protein sequence, read N- to C-terminus: Alcohol dehydrogenase 1 (379 aa).

Zn(2+) contacts are provided by Cys-47, Thr-49, His-69, Cys-99, Cys-102, Cys-105, Cys-113, and Cys-177. An alcohol is bound by residues Thr-49 and His-69. Position 49 (Thr-49) interacts with NAD(+). NAD(+) is bound by residues 202–207, Asp-226, Arg-231, Thr-272, Val-295, 295–297, Phe-322, and Arg-372; these read GLGAVG and VGV.

The protein belongs to the zinc-containing alcohol dehydrogenase family. In terms of assembly, homodimer. The cofactor is Zn(2+).

Its subcellular location is the cytoplasm. The enzyme catalyses a primary alcohol + NAD(+) = an aldehyde + NADH + H(+). It carries out the reaction a secondary alcohol + NAD(+) = a ketone + NADH + H(+). The sequence is that of Alcohol dehydrogenase 1 (ADH1) from Hordeum vulgare (Barley).